Reading from the N-terminus, the 521-residue chain is Bifunctional purine biosynthesis protein PurH (521 aa).

The MGS-like domain maps to 1-145 (MIKQALISVS…KNHRDVTVVV (145 aa)).

Belongs to the PurH family.

It catalyses the reaction (6R)-10-formyltetrahydrofolate + 5-amino-1-(5-phospho-beta-D-ribosyl)imidazole-4-carboxamide = 5-formamido-1-(5-phospho-D-ribosyl)imidazole-4-carboxamide + (6S)-5,6,7,8-tetrahydrofolate. The catalysed reaction is IMP + H2O = 5-formamido-1-(5-phospho-D-ribosyl)imidazole-4-carboxamide. It participates in purine metabolism; IMP biosynthesis via de novo pathway; 5-formamido-1-(5-phospho-D-ribosyl)imidazole-4-carboxamide from 5-amino-1-(5-phospho-D-ribosyl)imidazole-4-carboxamide (10-formyl THF route): step 1/1. Its pathway is purine metabolism; IMP biosynthesis via de novo pathway; IMP from 5-formamido-1-(5-phospho-D-ribosyl)imidazole-4-carboxamide: step 1/1. The chain is Bifunctional purine biosynthesis protein PurH from Burkholderia thailandensis (strain ATCC 700388 / DSM 13276 / CCUG 48851 / CIP 106301 / E264).